The primary structure comprises 429 residues: MTKPMTMSQKILAYHAGKEYVEPGDLIFANVDLVLGNDVTTPVAIKEFEKIGIDRVFDKDKIAIVPDHFTPNKDIKSAQQCKMVREFAKKYEITNYFEVGEMGIEHALLPEKGLVVPGDLVIGADSHTCTYGALGAFSTGIGSTDMACAMATGKCWFKVPEAIKFILYGKKTGWTSGKDIILHIIGMIGVDGALYKSMEYTGEGLKSLSMDDRFTIANMAIEAGAKNGIFEVDEKTIEYVKQHSTKPYKIFKADEDAEYSQVFEIDISKIRPTVAFPHLPENTKTIDEITEKIYIDQVVIGSCTNGRIEDLRIAAKILKGRKVKKGLRCIIFPATQNIYKQALKEGFIEIFIDAGCVVSTPTCGPCLGGHMGILADGEKALATTNRNFVGRMGHPNSEVYLSSPAIAAASAVLGYIGSPEELGMKGDEE.

[4Fe-4S] cluster-binding residues include C303, C363, and C366.

The protein belongs to the aconitase/IPM isomerase family. LeuC type 2 subfamily. In terms of assembly, heterodimer of LeuC and LeuD. [4Fe-4S] cluster serves as cofactor.

The enzyme catalyses (2R,3S)-3-isopropylmalate = (2S)-2-isopropylmalate. The protein operates within amino-acid biosynthesis; L-leucine biosynthesis; L-leucine from 3-methyl-2-oxobutanoate: step 2/4. Its function is as follows. Catalyzes the isomerization between 2-isopropylmalate and 3-isopropylmalate, via the formation of 2-isopropylmaleate. The polypeptide is 3-isopropylmalate dehydratase large subunit (Caldicellulosiruptor bescii (strain ATCC BAA-1888 / DSM 6725 / KCTC 15123 / Z-1320) (Anaerocellum thermophilum)).